A 465-amino-acid chain; its full sequence is Hexokinase-4 (465 aa).

A Hexokinase domain is found at 10–454 (ATKKEKVEQI…SGRGAALVSA (445 aa)). The segment at 67 to 203 (EGSEVGDFLS…DFEMDVVAMV (137 aa)) is hexokinase small subdomain. Residue 78-83 (DLGGTN) coordinates ATP. Substrate contacts are provided by residues 151–152 (SF), 168–169 (TK), and 204–205 (ND). Positions 204-443 (NDTVATMISC…CEITFIESEE (240 aa)) are hexokinase large subdomain. Thr228 lines the ATP pocket. 3 residues coordinate substrate: Asn231, Glu256, and Glu290. Residues 295–296 (GK), 332–336 (TRFVS), and 411–415 (SVYKL) contribute to the ATP site.

The protein belongs to the hexokinase family. As to quaternary structure, monomer. Interacts with MIDN; the interaction occurs preferentially at low glucose levels and results in inhibition of hexokinase activity. Interacts with GCKR; leading to sequestration in the nucleus. Expression is restricted to the liver and pancreatic islets (at protein level).

It is found in the cytoplasm. The protein resides in the nucleus. It localises to the mitochondrion. The enzyme catalyses a D-hexose + ATP = a D-hexose 6-phosphate + ADP + H(+). The catalysed reaction is D-fructose + ATP = D-fructose 6-phosphate + ADP + H(+). It catalyses the reaction D-glucose + ATP = D-glucose 6-phosphate + ADP + H(+). It carries out the reaction D-mannose + ATP = D-mannose 6-phosphate + ADP + H(+). It functions in the pathway carbohydrate metabolism; hexose metabolism. Its pathway is carbohydrate degradation; glycolysis; D-glyceraldehyde 3-phosphate and glycerone phosphate from D-glucose: step 1/4. With respect to regulation, subject to allosteric regulation. Low glucose and high fructose-6-phosphate triggers association with the inhibitor GCKR followed by sequestration in the nucleus. Functionally, catalyzes the phosphorylation of hexose, such as D-glucose, D-fructose and D-mannose, to hexose 6-phosphate (D-glucose 6-phosphate, D-fructose 6-phosphate and D-mannose 6-phosphate, respectively). Compared to other hexokinases, has a weak affinity for D-glucose, and is effective only when glucose is abundant. Mainly expressed in pancreatic beta cells and the liver and constitutes a rate-limiting step in glucose metabolism in these tissues. Since insulin secretion parallels glucose metabolism and the low glucose affinity of GCK ensures that it can change its enzymatic activity within the physiological range of glucose concentrations, GCK acts as a glucose sensor in the pancreatic beta cell. In pancreas, plays an important role in modulating insulin secretion. In liver, helps to facilitate the uptake and conversion of glucose by acting as an insulin-sensitive determinant of hepatic glucose usage. Required to provide D-glucose 6-phosphate for the synthesis of glycogen. Mediates the initial step of glycolysis by catalyzing phosphorylation of D-glucose to D-glucose 6-phosphate. This chain is Hexokinase-4, found in Rattus norvegicus (Rat).